We begin with the raw amino-acid sequence, 249 residues long: Ribosomal RNA small subunit methyltransferase G (249 aa).

Residues Gly88, Phe93, 111-113 (DAT), 139-140 (AE), and Arg158 each bind S-adenosyl-L-methionine. A disulfide bridge links Cys164 with Cys249. Positions 245 to 246 (RH) are RNA binding.

It belongs to the methyltransferase superfamily. RNA methyltransferase RsmG family.

The protein localises to the cytoplasm. It catalyses the reaction guanosine(527) in 16S rRNA + S-adenosyl-L-methionine = N(7)-methylguanosine(527) in 16S rRNA + S-adenosyl-L-homocysteine. In terms of biological role, specifically methylates the N7 position of guanine in position 527 of 16S rRNA. Shows a marked preference for deproteinized 16S rRNA as substrate and is completely inactive with native 30S subunits as substrate. This Thermus thermophilus (strain ATCC 27634 / DSM 579 / HB8) protein is Ribosomal RNA small subunit methyltransferase G.